The following is a 507-amino-acid chain: Arylsulfatase A (507 aa).

An N-terminal signal peptide occupies residues 1–18 (MEALWTLTLALAAGLAAA). Ca(2+) is bound by residues D29, D30, and C69. C69 acts as the Nucleophile in catalysis. Residue C69 is modified to 3-oxoalanine (Cys). K123 is a substrate binding site. Residue H125 is part of the active site. S150 is a substrate binding site. 2 disulfides stabilise this stretch: C156-C172 and C161-C168. N-linked (GlcNAc...) asparagine glycosylation is present at N158. N184 is a glycosylation site (N-linked (GlcNAc...) asparagine). H229 is a substrate binding site. D281 and N282 together coordinate Ca(2+). Cystine bridges form between C300–C414, C488–C500, C489–C502, and C493–C499. Residue K302 participates in substrate binding. N350 carries an N-linked (GlcNAc...) asparagine glycan.

It belongs to the sulfatase family. Homodimer at neutral pH and homooctamer at acidic pH. Exists both as a single chain of 58 kDa (component A) or as a chain of 50 kDa (component B) linked by disulfide bond(s) to a 7 kDa chain (component C). Interacts with SUMF1. Requires Ca(2+) as cofactor. Post-translationally, the conversion to 3-oxoalanine (also known as C-formylglycine, FGly), of a serine or cysteine residue in prokaryotes and of a cysteine residue in eukaryotes, is critical for catalytic activity. This post-translational modification is severely defective in multiple sulfatase deficiency (MSD).

Its subcellular location is the endoplasmic reticulum. The protein resides in the lysosome. It carries out the reaction an N-acyl-1-beta-D-(3-O-sulfo)-galactosyl-sphing-4-enine + H2O = a beta-D-galactosyl-(1&lt;-&gt;1')-N-acylsphing-4-enine + sulfate + H(+). Functionally, hydrolyzes cerebroside sulfate. In Bos taurus (Bovine), this protein is Arylsulfatase A (ARSA).